The primary structure comprises 308 residues: Methionyl-tRNA formyltransferase (308 aa).

110–113 lines the (6S)-5,6,7,8-tetrahydrofolate pocket; sequence SLLP.

Belongs to the Fmt family.

The catalysed reaction is L-methionyl-tRNA(fMet) + (6R)-10-formyltetrahydrofolate = N-formyl-L-methionyl-tRNA(fMet) + (6S)-5,6,7,8-tetrahydrofolate + H(+). In terms of biological role, attaches a formyl group to the free amino group of methionyl-tRNA(fMet). The formyl group appears to play a dual role in the initiator identity of N-formylmethionyl-tRNA by promoting its recognition by IF2 and preventing the misappropriation of this tRNA by the elongation apparatus. The sequence is that of Methionyl-tRNA formyltransferase from Neisseria gonorrhoeae (strain ATCC 700825 / FA 1090).